We begin with the raw amino-acid sequence, 1009 residues long: Type VII secretion system accessory factor EsaA (1009 aa).

Helical transmembrane passes span 7–27 (IYALIVTLIIIIAIVSMIFFV), 822–842 (ISPTLFVLLMYLLSMITAYIF), 869–889 (VITSGVIGTTGLVEGLIVGLI), 903–923 (KFILMVILTMMVFVLINTYLL), 928–948 (SIGMFLMIAALGLYFVAMNNL), and 979–999 (IGLALVILTVLVIIGFVLNMF).

It belongs to the EsaA family. Homodimer. Interacts with EssB.

The protein localises to the cell membrane. Component of the type VII secretion system (Ess). Provides together with EssB and other components such as EssC and EssE a secretion platform across the cytoplasmic membrane in the host. In Staphylococcus aureus (strain Mu50 / ATCC 700699), this protein is Type VII secretion system accessory factor EsaA.